Reading from the N-terminus, the 427-residue chain is Gamma-glutamyl phosphate reductase (427 aa).

This sequence belongs to the gamma-glutamyl phosphate reductase family.

Its subcellular location is the cytoplasm. The catalysed reaction is L-glutamate 5-semialdehyde + phosphate + NADP(+) = L-glutamyl 5-phosphate + NADPH + H(+). It functions in the pathway amino-acid biosynthesis; L-proline biosynthesis; L-glutamate 5-semialdehyde from L-glutamate: step 2/2. Its function is as follows. Catalyzes the NADPH-dependent reduction of L-glutamate 5-phosphate into L-glutamate 5-semialdehyde and phosphate. The product spontaneously undergoes cyclization to form 1-pyrroline-5-carboxylate. This chain is Gamma-glutamyl phosphate reductase, found in Anaeromyxobacter sp. (strain K).